A 787-amino-acid chain; its full sequence is ISWI one complex protein 3 (787 aa).

A compositionally biased stretch (polar residues) spans 1–22 (MDSPSNSIQNLQQEAQGSSSAQ). Disordered regions lie at residues 1-137 (MDSP…AHEQ), 672-693 (ILEQKSTTDNNPSINTNPLPKD), and 749-787 (TEYDSEEYVDDEEDDEADIYDDNDNDSSFDDGRVKRQRT). Over residues 40-50 (DQSVSVSQSSD) the composition is skewed to low complexity. A compositionally biased stretch (basic residues) spans 79-92 (KPKRKRPAPPKKKA). Basic and acidic residues predominate over residues 100–137 (SNDKVEKKKTTSIAKDGKPTLKTNDKKVAPKPKPAHEQ). Over residues 675-689 (QKSTTDNNPSINTNP) the composition is skewed to polar residues. The segment covering 751–777 (YDSEEYVDDEEDDEADIYDDNDNDSSF) has biased composition (acidic residues). Over residues 778–787 (DDGRVKRQRT) the composition is skewed to basic and acidic residues.

As to quaternary structure, component of the ISW1A complex, which at least consists of ISW1 and IOC3.

It localises to the nucleus. Functions as a component of the ISW1A complex, which acts in remodeling the chromatin by catalyzing an ATP-dependent alteration in the structure of nucleosomal DNA. The ISW1A complex represses gene expression at initiation through specific positioning of a promoter proximal dinucleosome. The sequence is that of ISWI one complex protein 3 (IOC3) from Saccharomyces cerevisiae (strain ATCC 204508 / S288c) (Baker's yeast).